A 540-amino-acid chain; its full sequence is Cytosolic carboxypeptidase 6 (540 aa).

The Peptidase M14 domain maps to 167–438 (YPYTYTRFQH…NVARTFLDYY (272 aa)). Residues histidine 230, glutamate 233, and histidine 328 each coordinate Zn(2+). Catalysis depends on glutamate 401, which acts as the Proton donor/acceptor.

It belongs to the peptidase M14 family. In terms of assembly, interacts with MYLK. Zn(2+) is required as a cofactor. In terms of tissue distribution, widely expressed. Expressed abundantly in testis, pituitary and brain and to a lower extent in eye, stomach, adrenal and kidney. In brain, expressed at low level in cerebellum as compared to cortex.

It is found in the cytoplasm. The protein resides in the cytosol. The protein localises to the cytoskeleton. Its subcellular location is the microtubule organizing center. It localises to the centrosome. It is found in the centriole. The protein resides in the golgi apparatus. The protein localises to the cilium basal body. It catalyses the reaction (L-glutamyl)(n+1)-gamma-L-glutamyl-L-glutamyl-[protein] + H2O = (L-glutamyl)(n)-gamma-L-glutamyl-L-glutamyl-[protein] + L-glutamate. The enzyme catalyses C-terminal L-alpha-aminoacyl-L-glutamyl-L-glutamyl-[tubulin] + H2O = C-terminal L-alpha-aminoacyl-L-glutamyl-[tubulin] + L-glutamate. Its function is as follows. Metallocarboxypeptidase that mediates protein deglutamylation of tubulin and non-tubulin target proteins. Catalyzes the removal of polyglutamate side chains present on the gamma-carboxyl group of glutamate residues within the C-terminal tail of tubulin protein. Specifically cleaves tubulin long-side-chains, while it is not able to remove the branching point glutamate. Also catalyzes the removal of polyglutamate residues from the carboxy-terminus of non-tubulin proteins such as MYLK. Mediates the deglutamylation of nucleotidyltransferase CGAS, leading to CGAS antiviral defense response activation. Involved in KLF4 deglutamylation which promotes KLF4 proteasome-mediated degradation, thereby negatively regulating cell pluripotency maintenance and embryogenesis. The sequence is that of Cytosolic carboxypeptidase 6 from Mus musculus (Mouse).